The chain runs to 216 residues: Protein-L-isoaspartate O-methyltransferase (216 aa).

Ser-65 is a catalytic residue.

The protein belongs to the methyltransferase superfamily. L-isoaspartyl/D-aspartyl protein methyltransferase family.

It is found in the cytoplasm. The catalysed reaction is [protein]-L-isoaspartate + S-adenosyl-L-methionine = [protein]-L-isoaspartate alpha-methyl ester + S-adenosyl-L-homocysteine. In terms of biological role, catalyzes the methyl esterification of L-isoaspartyl residues in peptides and proteins that result from spontaneous decomposition of normal L-aspartyl and L-asparaginyl residues. It plays a role in the repair and/or degradation of damaged proteins. This Chlorobium phaeobacteroides (strain DSM 266 / SMG 266 / 2430) protein is Protein-L-isoaspartate O-methyltransferase.